A 290-amino-acid chain; its full sequence is Ribosomal RNA small subunit methyltransferase A (290 aa).

Residues N27, L29, G54, E75, D100, and N125 each coordinate S-adenosyl-L-methionine.

The protein belongs to the class I-like SAM-binding methyltransferase superfamily. rRNA adenine N(6)-methyltransferase family. RsmA subfamily.

The protein resides in the cytoplasm. The enzyme catalyses adenosine(1518)/adenosine(1519) in 16S rRNA + 4 S-adenosyl-L-methionine = N(6)-dimethyladenosine(1518)/N(6)-dimethyladenosine(1519) in 16S rRNA + 4 S-adenosyl-L-homocysteine + 4 H(+). Specifically dimethylates two adjacent adenosines (A1518 and A1519) in the loop of a conserved hairpin near the 3'-end of 16S rRNA in the 30S particle. May play a critical role in biogenesis of 30S subunits. This chain is Ribosomal RNA small subunit methyltransferase A, found in Streptococcus thermophilus (strain ATCC BAA-250 / LMG 18311).